The sequence spans 220 residues: Zinc finger protein 36 (220 aa).

Residues 73–95 (FRCTVCGKAFASYQALGGHKSSH) form a C2H2-type 1 zinc finger. The interval 90-134 (GHKSSHRKPPSPGDHYGAAAAAQQLASAGDSKEDSASSAAGSTGP) is disordered. Over residues 107–117 (AAAAAQQLASA) the composition is skewed to low complexity. A C2H2-type 2 zinc finger spans residues 135 to 157 (HRCTICRRSFATGQALGGHKRCH).

In terms of biological role, probable transcription factor involved in abscisic acid (ABA) signaling. Required for the regulation of the cross-talk between NADPH oxidase, hydrogen peroxide and MAP kinase in ABA signaling. Regulates the expression of the NADPH oxidase genes RBOHB and RBOHE, and the MAPK genes MPK1, MPK4, MPK5, MPK7 and MPK14. Regulates ABA-induced hydrogen peroxide production and antioxidant defense. Required for tolerance to water stress and oxidative stress. The sequence is that of Zinc finger protein 36 from Oryza sativa subsp. japonica (Rice).